The primary structure comprises 133 residues: Probable mitochondrial pyruvate carrier 2 (133 aa).

Helical transmembrane passes span 39 to 55 (VTNL…IVPI), 73 to 91 (ASSL…TLIS), and 99 to 116 (MLAA…YNIY).

It belongs to the mitochondrial pyruvate carrier (MPC) (TC 2.A.105) family.

The protein localises to the mitochondrion inner membrane. Functionally, may mediate the uptake of pyruvate into mitochondria. The protein is Probable mitochondrial pyruvate carrier 2 of Dictyostelium discoideum (Social amoeba).